Consider the following 120-residue polypeptide: Large ribosomal subunit protein bL17 (120 aa).

Belongs to the bacterial ribosomal protein bL17 family. In terms of assembly, part of the 50S ribosomal subunit. Contacts protein L32.

In Mesomycoplasma hyopneumoniae (strain 232) (Mycoplasma hyopneumoniae), this protein is Large ribosomal subunit protein bL17.